The chain runs to 373 residues: Chaperone protein DnaJ (373 aa).

The region spanning Asn-4–Gly-68 is the J domain. The CR-type zinc finger occupies Gly-136–Gln-214. Residues Cys-149, Cys-152, Cys-166, Cys-169, Cys-188, Cys-191, Cys-202, and Cys-205 each coordinate Zn(2+). CXXCXGXG motif repeat units follow at residues Cys-149 to Gly-156, Cys-166 to Gly-173, Cys-188 to Gly-195, and Cys-202 to Gly-209.

The protein belongs to the DnaJ family. Homodimer. Zn(2+) serves as cofactor.

Its subcellular location is the cytoplasm. Functionally, participates actively in the response to hyperosmotic and heat shock by preventing the aggregation of stress-denatured proteins and by disaggregating proteins, also in an autonomous, DnaK-independent fashion. Unfolded proteins bind initially to DnaJ; upon interaction with the DnaJ-bound protein, DnaK hydrolyzes its bound ATP, resulting in the formation of a stable complex. GrpE releases ADP from DnaK; ATP binding to DnaK triggers the release of the substrate protein, thus completing the reaction cycle. Several rounds of ATP-dependent interactions between DnaJ, DnaK and GrpE are required for fully efficient folding. Also involved, together with DnaK and GrpE, in the DNA replication of plasmids through activation of initiation proteins. The sequence is that of Chaperone protein DnaJ from Rickettsia africae (strain ESF-5).